A 646-amino-acid chain; its full sequence is Acetyl-coenzyme A synthetase (646 aa).

CoA is bound by residues 190–193 (RAGN) and threonine 309. Residues 385–387 (GEP), 409–414 (DTWWQT), aspartate 498, and arginine 513 contribute to the ATP site. Serine 521 contributes to the CoA binding site. Residue arginine 524 coordinates ATP. Residues valine 535, histidine 537, and valine 540 each contribute to the Mg(2+) site. Position 582 (arginine 582) interacts with CoA. Lysine 607 carries the post-translational modification N6-acetyllysine.

Belongs to the ATP-dependent AMP-binding enzyme family. Mg(2+) serves as cofactor. In terms of processing, acetylated. Deacetylation by the SIR2-homolog deacetylase activates the enzyme.

The catalysed reaction is acetate + ATP + CoA = acetyl-CoA + AMP + diphosphate. In terms of biological role, catalyzes the conversion of acetate into acetyl-CoA (AcCoA), an essential intermediate at the junction of anabolic and catabolic pathways. AcsA undergoes a two-step reaction. In the first half reaction, AcsA combines acetate with ATP to form acetyl-adenylate (AcAMP) intermediate. In the second half reaction, it can then transfer the acetyl group from AcAMP to the sulfhydryl group of CoA, forming the product AcCoA. The polypeptide is Acetyl-coenzyme A synthetase (Pseudoalteromonas translucida (strain TAC 125)).